A 220-amino-acid polypeptide reads, in one-letter code: Ribosomal RNA large subunit methyltransferase E (220 aa).

Residues G60, W62, D92, D108, and D133 each coordinate S-adenosyl-L-methionine. Residue K173 is the Proton acceptor of the active site. The interval 198–220 (KPKASRDKSSETFILGRQLKHPR) is disordered.

Belongs to the class I-like SAM-binding methyltransferase superfamily. RNA methyltransferase RlmE family.

It localises to the cytoplasm. It carries out the reaction uridine(2552) in 23S rRNA + S-adenosyl-L-methionine = 2'-O-methyluridine(2552) in 23S rRNA + S-adenosyl-L-homocysteine + H(+). Specifically methylates the uridine in position 2552 of 23S rRNA at the 2'-O position of the ribose in the fully assembled 50S ribosomal subunit. This Burkholderia cenocepacia (strain HI2424) protein is Ribosomal RNA large subunit methyltransferase E.